We begin with the raw amino-acid sequence, 78 residues long: Omega-conotoxin-like VnMKLT1-0111 (78 aa).

A signal peptide spans Met-1–Ala-22. A propeptide spanning residues Asp-23–Lys-48 is cleaved from the precursor. Intrachain disulfides connect Cys-52–Cys-69, Cys-59–Cys-73, and Cys-68–Cys-77.

Belongs to the conotoxin O1 superfamily. Expressed by the venom duct.

The protein resides in the secreted. Functionally, omega-conotoxins act at presynaptic membranes, they bind and block voltage-gated calcium channels (Cav). The chain is Omega-conotoxin-like VnMKLT1-0111 from Conus ventricosus (Mediterranean cone).